The sequence spans 827 residues: Glycerol-3-phosphate acyltransferase (827 aa).

Positions 325-330 (CHRSHM) match the HXXXXD motif motif.

This sequence belongs to the GPAT/DAPAT family.

It localises to the cell inner membrane. It carries out the reaction sn-glycerol 3-phosphate + an acyl-CoA = a 1-acyl-sn-glycero-3-phosphate + CoA. It participates in phospholipid metabolism; CDP-diacylglycerol biosynthesis; CDP-diacylglycerol from sn-glycerol 3-phosphate: step 1/3. The polypeptide is Glycerol-3-phosphate acyltransferase (Shigella boydii serotype 4 (strain Sb227)).